The following is a 236-amino-acid chain: EP300-interacting inhibitor of differentiation 2 (236 aa).

Residues 1 to 15 are compositionally biased toward polar residues; it reads MSQLPAVSSAPQTGA. The interval 1–102 is disordered; it reads MSQLPAVSSA…REGPAAAAAS (102 aa). Composition is skewed to low complexity over residues 32–68 and 75–102; these read RALP…GRVA and AAAA…AAAS. Omega-N-methylarginine occurs at positions 63 and 79. Residues 170-190 adopt a coiled-coil conformation; that stretch reads RIQELEERRRRFVEACRAREA.

Heterodimer with EID2B. Interacts with the C-terminus of EP300. Interacts with HDAC1 and HDAC2. Interacts with SMAD2, SMAD4 and with the MH2 domain of SMAD3. As to expression, expressed in heart, brain, kidney and pancreas. Not detected in placenta.

Its subcellular location is the nucleus. Functionally, interacts with EP300 and acts as a repressor of MYOD-dependent transcription and muscle differentiation. Inhibits EP300 histone acetyltransferase activity. Acts as a repressor of TGFB/SMAD transcriptional responses. May act as a repressor of the TGFB/SMAD3-dependent signaling by selectively blocking formation of TGFB-induced SMAD3-SMAD4 complex. The chain is EP300-interacting inhibitor of differentiation 2 from Mus musculus (Mouse).